The chain runs to 235 residues: 7-carboxy-7-deazaguanine synthase (235 aa).

Substrate is bound by residues 25–27 (IQG) and arginine 40. The Radical SAM core domain occupies 31–235 (FTGTYSVFVR…PRLHLLVQLP (205 aa)). 3 residues coordinate [4Fe-4S] cluster: cysteine 44, cysteine 48, and cysteine 51. Threonine 53 serves as a coordination point for Mg(2+). Substrate is bound at residue threonine 85. S-adenosyl-L-methionine is bound by residues glycine 87 and 135 to 137 (SPK). Substrate is bound at residue proline 235.

Belongs to the radical SAM superfamily. 7-carboxy-7-deazaguanine synthase family. Homodimer. It depends on [4Fe-4S] cluster as a cofactor. The cofactor is S-adenosyl-L-methionine. Mg(2+) is required as a cofactor.

It carries out the reaction 6-carboxy-5,6,7,8-tetrahydropterin + H(+) = 7-carboxy-7-deazaguanine + NH4(+). It participates in purine metabolism; 7-cyano-7-deazaguanine biosynthesis. In terms of biological role, catalyzes the complex heterocyclic radical-mediated conversion of 6-carboxy-5,6,7,8-tetrahydropterin (CPH4) to 7-carboxy-7-deazaguanine (CDG), a step common to the biosynthetic pathways of all 7-deazapurine-containing compounds. The chain is 7-carboxy-7-deazaguanine synthase from Hyperthermus butylicus (strain DSM 5456 / JCM 9403 / PLM1-5).